We begin with the raw amino-acid sequence, 396 residues long: Elongation factor Tu (396 aa).

A tr-type G domain is found at 10–205; it reads KPHVNIGTIG…AVDESIPDPV (196 aa). Residues 19 to 26 are G1; it reads GHVDHGKT. 19–26 is a binding site for GTP; that stretch reads GHVDHGKT. Thr-26 lines the Mg(2+) pocket. The G2 stretch occupies residues 62-66; it reads GITIN. Residues 83-86 are G3; sequence DAPG. Residues 83–87 and 138–141 each bind GTP; these read DAPGH and NKSD. Residues 138 to 141 are G4; the sequence is NKSD. The segment at 175–177 is G5; the sequence is SAL.

It belongs to the TRAFAC class translation factor GTPase superfamily. Classic translation factor GTPase family. EF-Tu/EF-1A subfamily. In terms of assembly, monomer.

It is found in the cytoplasm. It carries out the reaction GTP + H2O = GDP + phosphate + H(+). In terms of biological role, GTP hydrolase that promotes the GTP-dependent binding of aminoacyl-tRNA to the A-site of ribosomes during protein biosynthesis. The sequence is that of Elongation factor Tu from Mycobacterium marinum (strain ATCC BAA-535 / M).